A 311-amino-acid polypeptide reads, in one-letter code: Acetyl-coenzyme A carboxylase carboxyl transferase subunit alpha (311 aa).

The CoA carboxyltransferase C-terminal domain occupies 36-286 (NLEKEVAKVY…ASYFVSKLEK (251 aa)).

Belongs to the AccA family. As to quaternary structure, acetyl-CoA carboxylase is a heterohexamer composed of biotin carboxyl carrier protein (AccB), biotin carboxylase (AccC) and two subunits each of ACCase subunit alpha (AccA) and ACCase subunit beta (AccD).

It is found in the cytoplasm. The catalysed reaction is N(6)-carboxybiotinyl-L-lysyl-[protein] + acetyl-CoA = N(6)-biotinyl-L-lysyl-[protein] + malonyl-CoA. Its pathway is lipid metabolism; malonyl-CoA biosynthesis; malonyl-CoA from acetyl-CoA: step 1/1. Its function is as follows. Component of the acetyl coenzyme A carboxylase (ACC) complex. First, biotin carboxylase catalyzes the carboxylation of biotin on its carrier protein (BCCP) and then the CO(2) group is transferred by the carboxyltransferase to acetyl-CoA to form malonyl-CoA. The sequence is that of Acetyl-coenzyme A carboxylase carboxyl transferase subunit alpha from Campylobacter curvus (strain 525.92).